The chain runs to 643 residues: 1-deoxy-D-xylulose-5-phosphate synthase (643 aa).

Thiamine diphosphate is bound by residues His-78 and 119-121; that span reads AHS. Position 150 (Asp-150) interacts with Mg(2+). Residues 151 to 152, Asn-179, Tyr-288, and Glu-370 contribute to the thiamine diphosphate site; that span reads GS. Mg(2+) is bound at residue Asn-179.

It belongs to the transketolase family. DXPS subfamily. As to quaternary structure, homodimer. Requires Mg(2+) as cofactor. The cofactor is thiamine diphosphate.

It catalyses the reaction D-glyceraldehyde 3-phosphate + pyruvate + H(+) = 1-deoxy-D-xylulose 5-phosphate + CO2. It participates in metabolic intermediate biosynthesis; 1-deoxy-D-xylulose 5-phosphate biosynthesis; 1-deoxy-D-xylulose 5-phosphate from D-glyceraldehyde 3-phosphate and pyruvate: step 1/1. Its function is as follows. Catalyzes the acyloin condensation reaction between C atoms 2 and 3 of pyruvate and glyceraldehyde 3-phosphate to yield 1-deoxy-D-xylulose-5-phosphate (DXP). In Brucella abortus (strain 2308), this protein is 1-deoxy-D-xylulose-5-phosphate synthase.